A 20-amino-acid polypeptide reads, in one-letter code: Unknown protein NF028 from 2D-PAGE (20 aa).

The protein is Unknown protein NF028 from 2D-PAGE of Naegleria fowleri (Brain eating amoeba).